The sequence spans 181 residues: Inner membrane-spanning protein YciB (181 aa).

A run of 5 helical transmembrane segments spans residues 10-30, 50-70, 80-100, 120-140, and 148-168; these read LIIFFALYKFYDIYVATGALI, MQLITFVMVALFGGMTLALHD, IVYVVFALGLTISQIMGKPAI, WAWVMFFSGCAALNLYVAYHL, and FKVFGLLAATLVFTLLTGGYI.

It belongs to the YciB family.

It is found in the cell inner membrane. In terms of biological role, plays a role in cell envelope biogenesis, maintenance of cell envelope integrity and membrane homeostasis. The chain is Inner membrane-spanning protein YciB from Vibrio cholerae serotype O1 (strain ATCC 39315 / El Tor Inaba N16961).